We begin with the raw amino-acid sequence, 295 residues long: Trimeric intracellular cation channel type 1B.1 (295 aa).

Residues 1-27 (MVVPESFQLDQEILLDAGAQLHRLKMY) are Lumenal-facing. Residues 28–45 (PYFDVAHYLLMIIEVRDD) form a helical membrane-spanning segment. The Cytoplasmic segment spans residues 46–56 (LGSAASIFSRK). The discontinuously helical transmembrane segment at 57 to 80 (HPLSCWLSSMLMCFADAFLANFLL) threads the bilayer. At 81-89 (GEPVIAPFK) the chain is on the lumenal side. A helical transmembrane segment spans residues 90–107 (RHDDIILATIIWYLVFYA). At 108–119 (PFDGIYKIAKIT) the chain is on the cytoplasmic side. Residues 120 to 148 (PVKCVLAVMKEVKRAYKVSHGVSHAAKLY) traverse the membrane as a helical segment. A 1,2-diacyl-sn-glycero-3-phospho-(1D-myo-inositol-4,5-bisphosphate) contacts are provided by Lys-129 and Arg-133. Residues 149–150 (PN) are Lumenal-facing. The chain crosses the membrane as a discontinuously helical span at residues 151 to 177 (SYIVQVLVGTAKGAGSGIVRTLEQLVR). Residue Ser-166 participates in a 1,2-diacyl-sn-glycero-3-phospho-(1D-myo-inositol-4,5-bisphosphate) binding. Residues 178 to 188 (GVWLPTHNELL) are Cytoplasmic-facing. The helical transmembrane segment at 189 to 210 (RPSFATKACVVAASVLALEKSG) threads the bilayer. The Lumenal portion of the chain corresponds to 211–215 (TYLTA). A helical transmembrane segment spans residues 216 to 239 (PHDLVYLVIVGFFVYFKLSAVILH). At 240 to 295 (VTDPFAPIENLFCAIFMGGIWDAVSRALAASRDRRAAGAHSNENGSSISTPEKKDQ) the chain is on the cytoplasmic side. Residues 274-295 (RAAGAHSNENGSSISTPEKKDQ) are disordered.

It belongs to the TMEM38 family. In terms of assembly, homotrimer; trimerization probably requires binding to phosphatidylinositol 4,5-bisphosphate (PIP2).

It is found in the endoplasmic reticulum membrane. Its function is as follows. Potassium channel that mediates transmembrane potassium transport. Might be required for maintenance of rapid intracellular calcium release. May act as a counter-ion channel that functions in synchronization with calcium release from intracellular stores. Binds phosphatidylinositol 4,5-bisphosphate (PIP2). This chain is Trimeric intracellular cation channel type 1B.1, found in Caenorhabditis elegans.